The primary structure comprises 102 residues: Class I hydrophobin 1 (102 aa).

Positions 1–18 (MSLFKILVAAATVATALA) are cleaved as a signal peptide. Intrachain disulfides connect cysteine 37/cysteine 84, cysteine 45/cysteine 78, cysteine 46/cysteine 63, and cysteine 85/cysteine 97.

The protein belongs to the fungal hydrophobin family.

Its subcellular location is the secreted. It is found in the cell wall. Aerial growth, conidiation, and dispersal of filamentous fungi in the environment rely upon a capability of their secreting small amphipathic proteins called hydrophobins (HPBs) with low sequence identity. Class I can self-assemble into an outermost layer of rodlet bundles on aerial cell surfaces, conferring cellular hydrophobicity that supports fungal growth, development and dispersal; whereas Class II form highly ordered films at water-air interfaces through intermolecular interactions but contribute nothing to the rodlet structure. Hyd1 is essential for stress tolerance, conidial hydrophobicity, adhesion to insect cuticle, and insect infectivity/pathogenicity. Plays a neglectable role in hyphal growth and asexual development. The chain is Class I hydrophobin 1 from Metarhizium robertsii (strain ARSEF 23 / ATCC MYA-3075) (Metarhizium anisopliae (strain ARSEF 23)).